A 518-amino-acid polypeptide reads, in one-letter code: Cytochrome P450 monooxygenase COX1 (518 aa).

A helical transmembrane segment spans residues 7 to 25 (VLIALSSIVVAYFVKTALA). Asn-48, Asn-100, Asn-292, Asn-302, and Asn-351 each carry an N-linked (GlcNAc...) asparagine glycan. Cys-450 lines the heme pocket. Asn-457 is a glycosylation site (N-linked (GlcNAc...) asparagine).

This sequence belongs to the cytochrome P450 family. The cofactor is heme.

It localises to the membrane. Its pathway is secondary metabolite biosynthesis. Cytochrome P450 monooxygenase; part of the gene cluster that mediates the biosynthesis of alpha-cuprenene and oxidized derivatives. The alpha-cuprenene synthase COP6 is the only sesquiterpene synthase identified in C.cinereus that appears to be part of a biosynthetic gene cluster and is highly specific since it catalyzes the cyclization of (2E,6E)-farnesyl diphosphate into only one product, alpha-cuprenene. The cytochrome P450 monooxygenase COX2 then oxidizes the cyclohexadiene ring of alpha-cuprenene at positions 1 and 4, yielding first alpha-cuparene, followed by alpha-cuparophenol and a further yet unidentified compound resulting from one additional oxidation step. The cytochrome P450 monooxygenase COX1 then likely catalyzes the oxidation at position 9 of the pentane ring of alpha-cuprenene to give the corresponding hydroxy or ketone derivatives. This is Cytochrome P450 monooxygenase COX1 from Coprinopsis cinerea (strain Okayama-7 / 130 / ATCC MYA-4618 / FGSC 9003) (Inky cap fungus).